The chain runs to 453 residues: UDP-glycosyltransferase 79B6 (453 aa).

UDP-alpha-D-glucose is bound by residues Ser266, 325–327 (VQQ), 342–350 (HCGFGSMWE), and 364–367 (LGEQ).

It belongs to the UDP-glycosyltransferase family.

The sequence is that of UDP-glycosyltransferase 79B6 (UGT79B6) from Arabidopsis thaliana (Mouse-ear cress).